The following is a 299-amino-acid chain: MREFGNPLGDRPPLDELARTDLLLDALAEREEVDFADPRDDALAALLGQWRDDLRWPPASALVSQDEAVAALRAGVAQRRRARRSLAAVGSVAAALLVLSGFGAVVADARPGDLLYGLHAMMFNRSRVSDDQIVLSAKANLAKVEQMIAQGQWAEAQDELAEVSSTVQAVTDGSRRQDLINEVNLLNTKVETRDPNATLRPGSPSNPAAPGSVGNSWTPLAPVVEPPTPPTPASAAEPSMSAGVSESPMPNSTSTVAASPSTPSSKPEPGSIDPSLEPADEATNPAGQPAPETPVSPTH.

The chain crosses the membrane as a helical span at residues 86 to 106 (LAAVGSVAAALLVLSGFGAVV). Residues 187–299 (NTKVETRDPN…APETPVSPTH (113 aa)) are disordered. 2 stretches are compositionally biased toward low complexity: residues 201–212 (PGSPSNPAAPGS) and 250–271 (PNST…EPGS).

In terms of assembly, interacts with ECF RNA polymerase sigma factor SigD; this should inhibit the interaction of SigD with the RNA polymerase catalytic core. In terms of processing, the cytosolic fragment is degraded by a ClpP1-ClpP2-ClpX complex, as would be expected after S1P and S2P intramembrane proteolysis. This releases SigD so that it may bind to the RNA polymerase catalytic core.

Its subcellular location is the cell membrane. Functionally, an anti-sigma factor for extracytoplasmic function (ECF) sigma factor SigD. ECF sigma factors are held in an inactive form by an anti-sigma factor until released by regulated intramembrane proteolysis (RIP). RIP occurs when an extracytoplasmic signal triggers a concerted proteolytic cascade to transmit information and elicit cellular responses. The membrane-spanning regulatory substrate protein is first cut extracytoplasmically (site-1 protease, S1P), then within the membrane itself (site-2 protease, S2P), while cytoplasmic proteases finish degrading the regulatory protein, liberating the sigma factor. Neither S1P nor S2P proteases have been so far identified for this anti-sigma factor. The sequence is that of Anti-sigma-D factor RsdA (rsda) from Mycobacterium bovis (strain ATCC BAA-935 / AF2122/97).